A 178-amino-acid chain; its full sequence is Protein Vhl (178 aa).

Belongs to the VHL family. As to quaternary structure, part of a complex with Cul2, Roc1a/Rbx1 and the elongin BC complex. Interacts with sima/Hif1a. Interacts with itself. Interacts with mgr and betaTub56D/tubulin beta-1 chain. Interacts with tubulin alpha-beta heterodimers by itself or in complex with mgr. Interacts with microtubules (MTs).

It functions in the pathway protein modification; protein ubiquitination. Involved in development of tracheal vasculature. Probably involved in halting cell migration at the end of vascular tube outgrowth. Possesses E3 ubiquitin ligase activity when in complex with Elongin BC complex, Cul2 and Rox1a/Rbx1, and can target sima/Hif1a for ubiquitination. May play a critical role in promoting microtubule stabilization when tubulins are correctly folded by the prefoldin complex. If tubulin is incorrectly folded, may promote its degradation. The sequence is that of Protein Vhl from Drosophila melanogaster (Fruit fly).